A 103-amino-acid polypeptide reads, in one-letter code: uncharacterized protein (103 aa).

The region spanning 12–88 is the EthD domain; it reads ADPAAFDEHY…AAADVANFAS (77 aa).

This is an uncharacterized protein from Rhodococcus erythropolis (Arthrobacter picolinophilus).